Reading from the N-terminus, the 182-residue chain is MFLSASMASSSLHVAIFSLIFLFSLAAANEVTVGGKSGDWKIPPSSSYSFTEWAQKARFKVGDFIVFRYESGKDSVLEVTKEAYNSCNTTNPLANYTDGETKVKLDRSGPFYFISGANGHCEKGQKLSLVVISPRHSVISPAPSPVEFEDGPALAPAPISGSVRLGGCYVVLGLVLGLCAWF.

An N-terminal signal peptide occupies residues 1–28 (MFLSASMASSSLHVAIFSLIFLFSLAAA). Residues 29–133 (NEVTVGGKSG…GQKLSLVVIS (105 aa)) form the Phytocyanin domain. Cys-87 and Cys-121 form a disulfide bridge. 2 N-linked (GlcNAc...) asparagine glycosylation sites follow: Asn-88 and Asn-95. Ser-160 carries the GPI-anchor amidated serine lipid modification. Positions 161 to 182 (GSVRLGGCYVVLGLVLGLCAWF) are cleaved as a propeptide — removed in mature form.

The protein belongs to the early nodulin-like (ENODL) family. In terms of assembly, interacts strongly and specifically with the extracellular domain of FERONIA at the synergid cell surface. In terms of tissue distribution, mostly expressed in seedlings and flowers, and, to a lower extent, in roots, stems and seeds, but barely in leaves.

The protein localises to the cell membrane. In terms of biological role, may act as a carbohydrate transporter. Required, together with ENODL11, ENODL12, ENODL13, ENODL14 and ENODL15, for male-female communication and pollen tube reception and burst at the synergid cell surface of the female gametophyte. This Arabidopsis thaliana (Mouse-ear cress) protein is Early nodulin-like protein 14.